Here is a 103-residue protein sequence, read N- to C-terminus: Co-chaperonin GroES (103 aa).

Belongs to the GroES chaperonin family. In terms of assembly, heptamer of 7 subunits arranged in a ring. Interacts with the chaperonin GroEL.

The protein localises to the cytoplasm. In terms of biological role, together with the chaperonin GroEL, plays an essential role in assisting protein folding. The GroEL-GroES system forms a nano-cage that allows encapsulation of the non-native substrate proteins and provides a physical environment optimized to promote and accelerate protein folding. GroES binds to the apical surface of the GroEL ring, thereby capping the opening of the GroEL channel. This is Co-chaperonin GroES from Synechococcus elongatus (strain ATCC 33912 / PCC 7942 / FACHB-805) (Anacystis nidulans R2).